The chain runs to 165 residues: uncharacterized protein (165 aa).

Residues 22–34 (QQANQENMSSRTD) show a composition bias toward polar residues. The interval 22–45 (QQANQENMSSRTDSPIPPFGESEQ) is disordered.

This is an uncharacterized protein from Homo sapiens (Human).